The sequence spans 340 residues: MKIVIDGMGGDNAPKSNVEGAVNAIKEYQVDLIITGDKDLLEKEFSNYEFDRNKLEIVHTTEIIENEDKPVKAIRSKKDSSMVVALNLVKEGKADAIISAGNTGALLAGGLFVVGRIKGIDRPCLCSAIPNVKRGMTLIADCGANADCKPKNLVEFAAMSNIYSRKVLGLENPKVALANVGLEEGKGNDLVKRSYEEIKKLDLNFIGNVEAREVINAYTDIIICDGFTGNILLKSAEGVALSVMSLIKETFMASTKSKIGALLIKDDLRKLKSFIDYSEYGGAPLLGLNGGVIKAHGSSDAKAIKNAINQGIKFSKGKVVEDINQFISKYNEENKNNEDE.

This sequence belongs to the PlsX family. Homodimer. Probably interacts with PlsY.

Its subcellular location is the cytoplasm. It catalyses the reaction a fatty acyl-[ACP] + phosphate = an acyl phosphate + holo-[ACP]. It functions in the pathway lipid metabolism; phospholipid metabolism. Its function is as follows. Catalyzes the reversible formation of acyl-phosphate (acyl-PO(4)) from acyl-[acyl-carrier-protein] (acyl-ACP). This enzyme utilizes acyl-ACP as fatty acyl donor, but not acyl-CoA. The chain is Phosphate acyltransferase from Clostridioides difficile (strain 630) (Peptoclostridium difficile).